The chain runs to 386 residues: Succinate--CoA ligase [ADP-forming] subunit beta (386 aa).

Residues 9–244 (KDLLTAYQLP…PSQENIRDVL (236 aa)) form the ATP-grasp domain. Residues Lys46, 53-55 (GRG), Val102, and Glu107 each bind ATP. Mg(2+)-binding residues include Asn199 and Asp213. Substrate contacts are provided by residues Asn264 and 321–323 (GIM).

It belongs to the succinate/malate CoA ligase beta subunit family. Heterotetramer of two alpha and two beta subunits. Mg(2+) serves as cofactor.

The catalysed reaction is succinate + ATP + CoA = succinyl-CoA + ADP + phosphate. The enzyme catalyses GTP + succinate + CoA = succinyl-CoA + GDP + phosphate. It functions in the pathway carbohydrate metabolism; tricarboxylic acid cycle; succinate from succinyl-CoA (ligase route): step 1/1. Functionally, succinyl-CoA synthetase functions in the citric acid cycle (TCA), coupling the hydrolysis of succinyl-CoA to the synthesis of either ATP or GTP and thus represents the only step of substrate-level phosphorylation in the TCA. The beta subunit provides nucleotide specificity of the enzyme and binds the substrate succinate, while the binding sites for coenzyme A and phosphate are found in the alpha subunit. This is Succinate--CoA ligase [ADP-forming] subunit beta from Chlamydia trachomatis serovar L2 (strain ATCC VR-902B / DSM 19102 / 434/Bu).